The chain runs to 562 residues: Protein KASH5 (562 aa).

The Cytoplasmic portion of the chain corresponds to 1–521 (MDLPEGPVGG…PQRLRVTRHP (521 aa)). A disordered region spans residues 125–153 (ALTSRQLPSGCPEAEEPANLESFGGEDPR). The stretch at 164–349 (SSLEDLELSN…LEEQLSQTYE (186 aa)) forms a coiled coil. The disordered stretch occupies residues 407–481 (ETSEETEFPS…DIPENPPERP (75 aa)). Over residues 431–448 (AHPEEGRKEPSMWLTRRE) the composition is skewed to basic and acidic residues. The chain crosses the membrane as a helical; Anchor for type IV membrane protein span at residues 522–542 (LIPAPVLGLLLLLLLSVLLLG). An interaction with SUN1 region spans residues 541–562 (LGPSPPPTWPHLQLCYLQPPPV). Residues 543-562 (PSPPPTWPHLQLCYLQPPPV) lie on the Perinuclear space side of the membrane.

In terms of assembly, core component the LINC complex which is composed of inner nuclear membrane SUN domain-containing proteins coupled to outer nuclear membrane KASH domain-containing nesprins. SUN and KASH domain-containing proteins seem to bind each other promiscuously; however, differentially expression of LINC complex constituents is giving rise to specific assemblies. At least SUN1/2-containing core LINC complexes are proposed to be hexameric composed of three protomers of each KASH and SUN domain-containing protein. Interacts with SUN1; this interaction mediates its telomere localization by forming a SUN1:KASH5 LINC complex. Component of a probable SUN2:KASH5 LINC complex. Self-associates. Interacts with DYNC1H1, DCTN1, DYNC1I1/2 and PAFAH1B1; suggesting the association with the dynein-dynactin motor complex. In terms of tissue distribution, expressed in testis (at protein level).

Its subcellular location is the nucleus outer membrane. The protein resides in the nucleus. It is found in the chromosome. The protein localises to the telomere. It localises to the nucleus envelope. Its function is as follows. As a component of the LINC (LInker of Nucleoskeleton and Cytoskeleton) complex, involved in the connection between the nuclear lamina and the cytoskeleton. The nucleocytoplasmic interactions established by the LINC complex play an important role in the transmission of mechanical forces across the nuclear envelope and in nuclear movement and positioning. Required for telomere attachment to nuclear envelope in the prophase of meiosis. Required for rapid telomere prophase movements implicating a SUN1/2:KASH5 LINC complex in which SUN1 and SUN2 seem to act at least partial redundantly. Required for homolog pairing during meiotic prophase in spermatocytes and probably oocytes. Essential for male and female gametogenesis. Recruits cytoplasmic dynein to telomere attachment sites at the nuclear envelope in spermatocytes. In oocytes is involved in meiotic resumption and spindle formation. The protein is Protein KASH5 of Homo sapiens (Human).